The chain runs to 756 residues: 1,4-alpha-glucan branching enzyme GlgB (756 aa).

Asp-425 acts as the Nucleophile in catalysis. The Proton donor role is filled by Glu-478.

It belongs to the glycosyl hydrolase 13 family. GlgB subfamily. In terms of assembly, monomer.

The catalysed reaction is Transfers a segment of a (1-&gt;4)-alpha-D-glucan chain to a primary hydroxy group in a similar glucan chain.. The protein operates within glycan biosynthesis; glycogen biosynthesis. In terms of biological role, catalyzes the formation of the alpha-1,6-glucosidic linkages in glycogen by scission of a 1,4-alpha-linked oligosaccharide from growing alpha-1,4-glucan chains and the subsequent attachment of the oligosaccharide to the alpha-1,6 position. This chain is 1,4-alpha-glucan branching enzyme GlgB, found in Cupriavidus necator (strain ATCC 17699 / DSM 428 / KCTC 22496 / NCIMB 10442 / H16 / Stanier 337) (Ralstonia eutropha).